A 784-amino-acid polypeptide reads, in one-letter code: Toll-like receptor 2 (784 aa).

An N-terminal signal peptide occupies residues 1–20 (MPRALWTAWVWAXIILSTEG). Residues 21–587 (ASDQASSLSC…ARLSLSECHR (567 aa)) are Extracellular-facing. A disulfide bridge connects residues cysteine 30 and cysteine 36. LRR repeat units lie at residues 54 to 77 (VKSL…RCVN), 78 to 101 (LKTL…HLRN), 102 to 125 (LEYL…SLYV), 126 to 150 (LKFL…HLPN), 151 to 175 (LXTL…GLTF), 176 to 199 (LEEL…SIQN), 200 to 223 (ISHL…IVSS), 224 to 250 (LDCL…MSTS), 251 to 278 (VKKL…YVSG), 279 to 308 (ILEV…HLGN), 309 to 337 (VETL…LTGK), 338 to 361 (VKRV…HLKS), 362 to 388 (LEYL…AWPF), 389 to 414 (LQTL…TLEN), 415 to 437 (LNSL…WPGK), 438 to 457 (MKQL…CLPQ), 458 to 478 (TLEI…ILPQ), 479 to 500 (LKEL…FLPV), and 501 to 524 (LSVM…SFQQ). N-linked (GlcNAc...) asparagine glycosylation occurs at asparagine 114. N-linked (GlcNAc...) asparagine glycosylation is present at asparagine 199. Cysteine 353 and cysteine 382 form a disulfide bridge. A disulfide bridge connects residues cysteine 432 and cysteine 454. An N-linked (GlcNAc...) asparagine glycan is attached at asparagine 442. Residues 525–579 (LKTLEAGGNNFICSCDFLSFTQGQQALGRVLVDWPDDYRCDSPSHVRGQRVQDAR) enclose the LRRCT domain. A helical transmembrane segment spans residues 588–608 (AAVVSAACCALFLVLLLTGVL). The Cytoplasmic segment spans residues 609–784 (CHRFHGLWYM…WLNLRAAIRS (176 aa)). The TIR domain maps to 639–782 (ICYDAFVSYS…GFWLNLRAAI (144 aa)). Lysine 754 participates in a covalent cross-link: Glycyl lysine isopeptide (Lys-Gly) (interchain with G-Cter in ubiquitin). Positions 761–778 (YLEWPVDETQQEGFWLNL) match the ATG16L1-binding motif motif.

This sequence belongs to the Toll-like receptor family. As to quaternary structure, interacts with LY96, TLR1 and TLR6 (via extracellular domain). TLR2 seems to exist in heterodimers with either TLR1 or TLR6 before stimulation by the ligand. The heterodimers form bigger oligomers in response to their corresponding ligands as well as further heterotypic associations with other receptors such as CD14 and/or CD36. Binds MYD88 (via TIR domain). Interacts with TICAM1. Interacts with CNPY3. Interacts with ATG16L1. Interacts with PPP1R11. Interacts with TICAM2. Interacts with TIRAP. Post-translationally, ubiquitinated at Lys-754 by PPP1R11, leading to its degradation. Deubiquitinated by USP2. In terms of processing, glycosylation of Asn-442 is critical for secretion of the N-terminal ectodomain of TLR2.

The protein localises to the membrane. It localises to the cytoplasmic vesicle. Its subcellular location is the phagosome membrane. The protein resides in the membrane raft. In terms of biological role, cooperates with LY96 to mediate the innate immune response to bacterial lipoproteins and other microbial cell wall components. Cooperates with TLR1 or TLR6 to mediate the innate immune response to bacterial lipoproteins or lipopeptides. Acts via MYD88 and TRAF6, leading to NF-kappa-B activation, cytokine secretion and the inflammatory response. May also promote apoptosis in response to lipoproteins. Forms activation clusters composed of several receptors depending on the ligand, these clusters trigger signaling from the cell surface and subsequently are targeted to the Golgi in a lipid-raft dependent pathway. Forms the cluster TLR2:TLR6:CD14:CD36 in response to diacylated lipopeptides and TLR2:TLR1:CD14 in response to triacylated lipopeptides. The chain is Toll-like receptor 2 (TLR2) from Bison bison (American bison).